The chain runs to 119 residues: Small ribosomal subunit protein bS16 (119 aa).

Basic residues predominate over residues 96 to 107; sequence RKKRRAYRQRRS. The tract at residues 96–119 is disordered; it reads RKKRRAYRQRRSTQREEAAKDATK. Basic and acidic residues predominate over residues 108 to 119; sequence TQREEAAKDATK.

It belongs to the bacterial ribosomal protein bS16 family.

The polypeptide is Small ribosomal subunit protein bS16 (Chlamydia pneumoniae (Chlamydophila pneumoniae)).